The sequence spans 423 residues: Histidine--tRNA ligase (423 aa).

Belongs to the class-II aminoacyl-tRNA synthetase family. In terms of assembly, homodimer.

The protein localises to the cytoplasm. It carries out the reaction tRNA(His) + L-histidine + ATP = L-histidyl-tRNA(His) + AMP + diphosphate + H(+). The sequence is that of Histidine--tRNA ligase from Rhodococcus opacus (strain B4).